A 368-amino-acid chain; its full sequence is Chorismate synthase (368 aa).

Residue R46 coordinates NADP(+). FMN-binding positions include 124 to 126 (RAS), G284, 299 to 303 (KPTPS), and R326.

It belongs to the chorismate synthase family. It depends on FMNH2 as a cofactor.

It carries out the reaction 5-O-(1-carboxyvinyl)-3-phosphoshikimate = chorismate + phosphate. It functions in the pathway metabolic intermediate biosynthesis; chorismate biosynthesis; chorismate from D-erythrose 4-phosphate and phosphoenolpyruvate: step 7/7. Functionally, catalyzes the anti-1,4-elimination of the C-3 phosphate and the C-6 proR hydrogen from 5-enolpyruvylshikimate-3-phosphate (EPSP) to yield chorismate, which is the branch point compound that serves as the starting substrate for the three terminal pathways of aromatic amino acid biosynthesis. This reaction introduces a second double bond into the aromatic ring system. This is Chorismate synthase from Pyrobaculum aerophilum (strain ATCC 51768 / DSM 7523 / JCM 9630 / CIP 104966 / NBRC 100827 / IM2).